Reading from the N-terminus, the 96-residue chain is Large ribosomal subunit protein bL28 (96 aa).

Over residues methionine 1–asparagine 22 the composition is skewed to polar residues. Positions methionine 1 to lysine 24 are disordered.

It belongs to the bacterial ribosomal protein bL28 family.

This chain is Large ribosomal subunit protein bL28, found in Rhizobium meliloti (strain 1021) (Ensifer meliloti).